A 277-amino-acid chain; its full sequence is Thymidylate synthase (277 aa).

Residues arginine 27 and 132 to 133 each bind dUMP; that span reads RR. Cysteine 152 serves as the catalytic Nucleophile. DUMP-binding positions include 179–182, asparagine 190, and 220–222; these read RSAD and HVY. A (6R)-5,10-methylene-5,6,7,8-tetrahydrofolate-binding site is contributed by aspartate 182. A (6R)-5,10-methylene-5,6,7,8-tetrahydrofolate-binding site is contributed by alanine 276.

It belongs to the thymidylate synthase family. Bacterial-type ThyA subfamily. Homodimer.

The protein resides in the cytoplasm. The catalysed reaction is dUMP + (6R)-5,10-methylene-5,6,7,8-tetrahydrofolate = 7,8-dihydrofolate + dTMP. Its pathway is pyrimidine metabolism; dTTP biosynthesis. Functionally, catalyzes the reductive methylation of 2'-deoxyuridine-5'-monophosphate (dUMP) to 2'-deoxythymidine-5'-monophosphate (dTMP) while utilizing 5,10-methylenetetrahydrofolate (mTHF) as the methyl donor and reductant in the reaction, yielding dihydrofolate (DHF) as a by-product. This enzymatic reaction provides an intracellular de novo source of dTMP, an essential precursor for DNA biosynthesis. The chain is Thymidylate synthase from Albidiferax ferrireducens (strain ATCC BAA-621 / DSM 15236 / T118) (Rhodoferax ferrireducens).